Here is a 510-residue protein sequence, read N- to C-terminus: MNQEMIVVLDFGSQYNQLITRRIREFGVYSELHPHTIRAEEIRALNAKGIIFSGGPNSVYDEQAFTCDPAIFELGLPILGICYGMQLMAHHLGGKVEKATHREYGKALIQVKNDSLLFHGLPDEQVVWMSHGDLVTAPPAGFAVDATSPSCPIAAMSDERRKWYGVQFHPEVRHSVYGNDLLKKFVFEVCGCRGDWTMENFIDEQVRRIREQVGGKKVLCALSGGVDSSVAAVLVHRAIGDQLTCIFVDHGLLRKGEAESVMKTFREQFQMNVIKVDAKDRFLAKLKGVTDPEQKRKIIGNEFIYVFDDEAAKLEGIEFLVQGTLYTDIIESGTATAQTIKSHHNVGGLPEDMKFELIEPLNTLFKDEVRALGTQLGIPDEIVWRQPFPGPGLGIRVLGEVTEEKLEIVRESDAILREEVKKAGLDREIWQYFTVLPDIRSVGVMGDARTYDYTVAIRAVTSIDGMTADWARIPWDVLERISTRIVNEVPHVNRVVYDITSKPPATIEWE.

The region spanning M5–D195 is the Glutamine amidotransferase type-1 domain. Residue C82 is the Nucleophile of the active site. Catalysis depends on residues H169 and E171. A GMPS ATP-PPase domain is found at W196–R385. Position 223–229 (S223–S229) interacts with ATP.

Homodimer.

It carries out the reaction XMP + L-glutamine + ATP + H2O = GMP + L-glutamate + AMP + diphosphate + 2 H(+). It participates in purine metabolism; GMP biosynthesis; GMP from XMP (L-Gln route): step 1/1. Functionally, catalyzes the synthesis of GMP from XMP. The sequence is that of GMP synthase [glutamine-hydrolyzing] from Geobacillus kaustophilus (strain HTA426).